The primary structure comprises 943 residues: Isoleucine--tRNA ligase (943 aa).

The 'HIGH' region signature appears at proline 58–histidine 68. An L-isoleucyl-5'-AMP-binding site is contributed by glutamate 567. Residues lysine 608–serine 612 carry the 'KMSKS' region motif. Lysine 611 is a binding site for ATP. The Zn(2+) site is built by cysteine 906, cysteine 909, cysteine 926, and cysteine 929.

It belongs to the class-I aminoacyl-tRNA synthetase family. IleS type 1 subfamily. In terms of assembly, monomer. The cofactor is Zn(2+).

It localises to the cytoplasm. The enzyme catalyses tRNA(Ile) + L-isoleucine + ATP = L-isoleucyl-tRNA(Ile) + AMP + diphosphate. Functionally, catalyzes the attachment of isoleucine to tRNA(Ile). As IleRS can inadvertently accommodate and process structurally similar amino acids such as valine, to avoid such errors it has two additional distinct tRNA(Ile)-dependent editing activities. One activity is designated as 'pretransfer' editing and involves the hydrolysis of activated Val-AMP. The other activity is designated 'posttransfer' editing and involves deacylation of mischarged Val-tRNA(Ile). The sequence is that of Isoleucine--tRNA ligase from Pseudomonas fluorescens (strain ATCC BAA-477 / NRRL B-23932 / Pf-5).